We begin with the raw amino-acid sequence, 80 residues long: Serine palmitoyltransferase small subunit A-B (80 aa).

Residues 1–21 lie on the Cytoplasmic side of the membrane; the sequence is MKVSCEDVNGPRSSLGRAWNH. Residues 22–38 form a helical membrane-spanning segment; sequence VSWLYYQYLLVTALYML. The Lumenal portion of the chain corresponds to 39 to 43; sequence EPWER. The chain crosses the membrane as a helical span at residues 44–66; that stretch reads TVFNSMLVSIVGMALYTGYIFMP. Topologically, residues 67 to 80 are cytoplasmic; it reads QHILAILHYFEIVQ.

Belongs to the SPTSS family. SPTSSA subfamily. As to quaternary structure, component of the serine palmitoyltransferase (SPT) complex, which is composed of SPTLC1, SPTLC2 or SPTLC3 and SPTSSA or SPTSSB. The heterodimer consisting of SPTLC1 and SPTLC2/SPTLC3 forms the catalytic core of the enzyme, while SPTSSA or SPTSSB subunits determine substrate specificity. SPT also interacts with ORMDL proteins, especially ORMDL3, which negatively regulate SPT activity in the presence of ceramides.

It is found in the endoplasmic reticulum membrane. It functions in the pathway lipid metabolism; sphingolipid metabolism. Functionally, component of the serine palmitoyltransferase multisubunit enzyme (SPT) that catalyzes the initial and rate-limiting step in sphingolipid biosynthesis by condensing L-serine and activated acyl-CoA (most commonly palmitoyl-CoA) to form long-chain bases. The SPT complex is composed of SPTLC1, SPTLC2 or SPTLC3 and SPTSSA or SPTSSB. Within this complex, the heterodimer consisting of SPTLC1 and SPTLC2/SPTLC3 forms the catalytic core. Within the SPT complex, SPTSSA stimulates the catalytic activity and plays a role in substrate specificity, which depends upon the overall complex composition. The SPTLC1-SPTLC2-SPTSSA complex shows a strong preference for C16-CoA substrate, while the SPTLC1-SPTLC3-SPTSSA isozyme uses both C14-CoA and C16-CoA as substrates, with a slight preference for C14-CoA. Independently of its action as a SPT component, may be involved in MBOAT7 localization to mitochondria-associated membranes, a membrane bridge between the endoplasmic reticulum and mitochondria, may hence affect MBOAT7-catalyzed incorporation of arachidonic acid into phosphatidylinositol. The protein is Serine palmitoyltransferase small subunit A-B (sptssa-b) of Xenopus laevis (African clawed frog).